A 257-amino-acid chain; its full sequence is HTH-type transcriptional activator mta (257 aa).

The 70-residue stretch at 2–71 (KYQVKQVAEI…LDEIKEMLDH (70 aa)) folds into the HTH merR-type domain. The H-T-H motif DNA-binding region spans 5–24 (VKQVAEISGVSIRTLHHYDN). Residues 71–74 (HPNF) are hinge. An essential for dimerization region spans residues 76–104 (RKAALQSQKEILMKKKQRMDEMIQTIDRT). A coiled-coil region spans residues 76–107 (RKAALQSQKEILMKKKQRMDEMIQTIDRTLLS).

As to quaternary structure, homodimer.

Its subcellular location is the cytoplasm. Its function is as follows. Global transcriptional regulator that activates transcription of bmr and blt by binding directly to their promoter. Also stimulates the expression of the mta gene itself, ydfK and ymfE. The chain is HTH-type transcriptional activator mta (mta) from Bacillus subtilis (strain 168).